The following is a 218-amino-acid chain: MAMFEQMRANVGKLLKGIDRYNPENLATLERYVETQAKENAYDLEANLAVLKLYQFNPAFFQTTVTAQILLKALTNLPHTDFTLCKCMIDQAHQEERPIRQILYLGDLLETCHFQAFWQALDENMDLLEGITGFEDSVRKFICHVVGITYQHIDRWLLAEMLGDLTDSQLKVWMSKYGWSADESGQIFICSQEESIKPKNIVEKIDFDSVSSIMASSQ.

Position 2 is an N-acetylalanine (A2). Phosphothreonine is present on T28. One can recognise a PCI domain in the interval 42-204 (YDLEANLAVL…SIKPKNIVEK (163 aa)). Phosphoserine is present on S217.

Belongs to the eIF-3 subunit K family. As to quaternary structure, component of the eukaryotic translation initiation factor 3 (eIF-3) complex, which is composed of 13 subunits: EIF3A, EIF3B, EIF3C, EIF3D, EIF3E, EIF3F, EIF3G, EIF3H, EIF3I, EIF3J, EIF3K, EIF3L and EIF3M. The eIF-3 complex appears to include 3 stable modules: module A is composed of EIF3A, EIF3B, EIF3G and EIF3I; module B is composed of EIF3F, EIF3H, and EIF3M; and module C is composed of EIF3C, EIF3D, EIF3E, EIF3K and EIF3L. EIF3C of module C binds EIF3B of module A and EIF3H of module B, thereby linking the three modules. EIF3J is a labile subunit that binds to the eIF-3 complex via EIF3B. The eIF-3 complex interacts with RPS6KB1 under conditions of nutrient depletion. Mitogenic stimulation leads to binding and activation of a complex composed of MTOR and RPTOR, leading to phosphorylation and release of RPS6KB1 and binding of EIF4B to eIF-3. Interacts with CCND3, but not with CCND1 and CCND2.

The protein localises to the nucleus. Its subcellular location is the cytoplasm. Its function is as follows. Component of the eukaryotic translation initiation factor 3 (eIF-3) complex, which is required for several steps in the initiation of protein synthesis. The eIF-3 complex associates with the 40S ribosome and facilitates the recruitment of eIF-1, eIF-1A, eIF-2:GTP:methionyl-tRNAi and eIF-5 to form the 43S pre-initiation complex (43S PIC). The eIF-3 complex stimulates mRNA recruitment to the 43S PIC and scanning of the mRNA for AUG recognition. The eIF-3 complex is also required for disassembly and recycling of post-termination ribosomal complexes and subsequently prevents premature joining of the 40S and 60S ribosomal subunits prior to initiation. The eIF-3 complex specifically targets and initiates translation of a subset of mRNAs involved in cell proliferation, including cell cycling, differentiation and apoptosis, and uses different modes of RNA stem-loop binding to exert either translational activation or repression. This Bos taurus (Bovine) protein is Eukaryotic translation initiation factor 3 subunit K.